We begin with the raw amino-acid sequence, 244 residues long: Phosphoadenosine 5'-phosphosulfate reductase (244 aa).

The active-site Nucleophile; cysteine thiosulfonate intermediate is the C239.

It belongs to the PAPS reductase family. CysH subfamily.

It localises to the cytoplasm. The enzyme catalyses [thioredoxin]-disulfide + sulfite + adenosine 3',5'-bisphosphate + 2 H(+) = [thioredoxin]-dithiol + 3'-phosphoadenylyl sulfate. Its pathway is sulfur metabolism; hydrogen sulfide biosynthesis; sulfite from sulfate: step 3/3. Functionally, catalyzes the formation of sulfite from phosphoadenosine 5'-phosphosulfate (PAPS) using thioredoxin as an electron donor. This Salmonella schwarzengrund (strain CVM19633) protein is Phosphoadenosine 5'-phosphosulfate reductase.